Reading from the N-terminus, the 1078-residue chain is MTMTTTNYGADQIQVLEGLEPVRKRPGMYIGSTGPKGLHHLVYEVVDNAIDEALAGYCTHIEIDINADGSVTVVDNGRGIPTDIHPTTGRSALETVLTVLHAGGKFGGGGYKVSGGLHGVGVSVVNALSEWVEVKVWRQGKEHFQRFERGNPIGTLEATPNEGHSTGTQVSFLPDTQIFKDGIEFDYHTLASRLKELAYLNAGVRITFGDRRADSLKEEQFYYEGGIREYVTYMTTDKTPLHEEIIYTSGEKNDVQVEVALQWCVDAYSDTLLGFANNIRTIDGGTHLEGLKAVLTRTLNSVARKRNKLKDGDSNLGGENIREGLTGVISVKVPDPEFEGQTKTKLGNTEVRGIVDTLVGEALTEFLEFNPGVADAIIEKAVQAFKAAEAARRARELVRRKSVLESSTLPGKLADCSSKDPSESEIFIVEGDSAGGCFSGDTLVALTDGRSVSFEQLVEEEKQGKQNFCYTIRHDGSIGVEKIINARKTKTNAKVIKVTLDNGESIICTPDHKFMLRDGSYKCAMDLTLDDSLMPLHRKISTTEDSGITIDGYEMVWSPRSDSWLFTHLVADWYNRWQGIYIAEEKQHCHHKDFNKRNNNPDNLIRLSPEKHLALHRKHISKTLHRPDVVEKCRRIHQSPEFRRKMSARMQSPETRAILSKQAQAQWQNETYKLTMMESWRSFYDSNEDYRQQNAEQLNRAQQEYWAQAENRTAQAERVRQHFAQNPGLRQQYSENAVKQWNNPELLKWRQKKTKEQWTPEFREKRREALAQTYYRKTLAALKQVEIENGYLDISAYDSYRISTKDKSLLRFDRFCERYFENDENLAREAVLNYNHRIVNIEAVSETIDVYDIEVPHTHNFALASGVFVHNSAKQGRDRRFQAILPLRGKILNIEKTDDAKIYKNTEIQALITALGLGIKGDDFDISSLRYHRVVIMTDADVDGAHIRTLLLTFFYRYQRDLVDQGYIYIACPPLYKLERGKNHFYCYSDRELQEQISQFPPNANYTIQRFKGLGEMMPQQLWDTTMNPESRTMKRVHIEDAAEADRIFTVLMGDRVAPRREFIETYGTKLDLTDLDI.

In terms of domain architecture, Toprim spans 889-974 (GKILNIEKTD…QGYIYIACPP (86 aa)). The Mg(2+) site is built by Glu895, Asp939, and Asp941.

The protein belongs to the type II topoisomerase GyrB family. Heterotetramer, composed of two GyrA and two GyrB chains. In the heterotetramer, GyrA contains the active site tyrosine that forms a transient covalent intermediate with DNA, while GyrB binds cofactors and catalyzes ATP hydrolysis. The cofactor is Mg(2+). This protein undergoes a protein self splicing that involves a post-translational excision of the intervening region (intein) followed by peptide ligation.

The protein localises to the cytoplasm. The catalysed reaction is ATP-dependent breakage, passage and rejoining of double-stranded DNA.. In terms of biological role, a type II topoisomerase that negatively supercoils closed circular double-stranded (ds) DNA in an ATP-dependent manner to modulate DNA topology and maintain chromosomes in an underwound state. Negative supercoiling favors strand separation, and DNA replication, transcription, recombination and repair, all of which involve strand separation. Also able to catalyze the interconversion of other topological isomers of dsDNA rings, including catenanes and knotted rings. Type II topoisomerases break and join 2 DNA strands simultaneously in an ATP-dependent manner. This chain is DNA gyrase subunit B (gyrB), found in Synechocystis sp. (strain ATCC 27184 / PCC 6803 / Kazusa).